The following is a 274-amino-acid chain: Undecaprenyl-diphosphatase (274 aa).

Transmembrane regions (helical) follow at residues Met-1–Ile-21, Val-48–Gly-68, Leu-84–Ile-104, Leu-108–Ile-128, Ile-143–Gly-163, Phe-187–Ser-207, Ile-214–Ile-234, and Val-254–Leu-274.

It belongs to the UppP family.

The protein localises to the cell membrane. The catalysed reaction is di-trans,octa-cis-undecaprenyl diphosphate + H2O = di-trans,octa-cis-undecaprenyl phosphate + phosphate + H(+). Functionally, catalyzes the dephosphorylation of undecaprenyl diphosphate (UPP). Confers resistance to bacitracin. The polypeptide is Undecaprenyl-diphosphatase (Deinococcus geothermalis (strain DSM 11300 / CIP 105573 / AG-3a)).